The primary structure comprises 145 residues: Hemoglobin subunit beta (145 aa).

One can recognise a Globin domain in the interval 1–145 (MLTAEEKAAV…VANALAHRYH (145 aa)). Thr-11 is subject to Phosphothreonine. The residue at position 43 (Ser-43) is a Phosphoserine. Lys-58 bears the N6-acetyllysine mark. Heme b is bound at residue His-62. An N6-acetyllysine modification is found at Lys-81. Residue His-91 coordinates heme b. Cys-92 carries the post-translational modification S-nitrosocysteine.

The protein belongs to the globin family. Heterotetramer of two alpha chains and two beta chains. Red blood cells.

Functionally, involved in oxygen transport from the lung to the various peripheral tissues. The sequence is that of Hemoglobin subunit beta (HBB) from Bos gaurus frontalis (Domestic gayal).